A 330-amino-acid polypeptide reads, in one-letter code: 4-hydroxythreonine-4-phosphate dehydrogenase (330 aa).

A substrate-binding site is contributed by T133. A divalent metal cation is bound by residues H161, H206, and H261. 3 residues coordinate substrate: K269, N278, and R287.

Belongs to the PdxA family. Homodimer. It depends on Zn(2+) as a cofactor. Mg(2+) serves as cofactor. The cofactor is Co(2+).

The protein resides in the cytoplasm. It carries out the reaction 4-(phosphooxy)-L-threonine + NAD(+) = 3-amino-2-oxopropyl phosphate + CO2 + NADH. The protein operates within cofactor biosynthesis; pyridoxine 5'-phosphate biosynthesis; pyridoxine 5'-phosphate from D-erythrose 4-phosphate: step 4/5. In terms of biological role, catalyzes the NAD(P)-dependent oxidation of 4-(phosphooxy)-L-threonine (HTP) into 2-amino-3-oxo-4-(phosphooxy)butyric acid which spontaneously decarboxylates to form 3-amino-2-oxopropyl phosphate (AHAP). The protein is 4-hydroxythreonine-4-phosphate dehydrogenase of Xylella fastidiosa (strain 9a5c).